The chain runs to 541 residues: Alpha-zingiberene synthase (541 aa).

Asp296, Asp300, Asp437, Thr441, and Glu445 together coordinate Mg(2+). A DDXXD motif motif is present at residues 296–300 (DDIYD).

The protein belongs to the terpene synthase family. Mg(2+) is required as a cofactor. The cofactor is Mn(2+).

It carries out the reaction (2E,6E)-farnesyl diphosphate = alpha-zingiberene + diphosphate. Its pathway is secondary metabolite biosynthesis; terpenoid biosynthesis. Functionally, sesquiterpene synthase that catalyzes the formation of alpha-zingiberene and other sesquiterpenes from trans,trans-farnesyl diphosphate (FPP). May have an additional monoterpene synthase activity. This chain is Alpha-zingiberene synthase (ZIS), found in Ocimum basilicum (Sweet basil).